We begin with the raw amino-acid sequence, 179 residues long: Large ribosomal subunit protein uL5 (179 aa).

The protein belongs to the universal ribosomal protein uL5 family. Part of the 50S ribosomal subunit; part of the 5S rRNA/L5/L18/L25 subcomplex. Contacts the 5S rRNA and the P site tRNA. Forms a bridge to the 30S subunit in the 70S ribosome.

Its function is as follows. This is one of the proteins that bind and probably mediate the attachment of the 5S RNA into the large ribosomal subunit, where it forms part of the central protuberance. In the 70S ribosome it contacts protein S13 of the 30S subunit (bridge B1b), connecting the 2 subunits; this bridge is implicated in subunit movement. Contacts the P site tRNA; the 5S rRNA and some of its associated proteins might help stabilize positioning of ribosome-bound tRNAs. This is Large ribosomal subunit protein uL5 from Xylella fastidiosa (strain 9a5c).